Reading from the N-terminus, the 495-residue chain is Glycerol kinase (495 aa).

T13 serves as a coordination point for ADP. ATP is bound by residues T13, T14, and S15. T13 contacts sn-glycerol 3-phosphate. R17 contacts ADP. Positions 83, 84, 135, and 244 each coordinate sn-glycerol 3-phosphate. Residues R83, E84, Y135, D244, and Q245 each coordinate glycerol. T266 and G309 together coordinate ADP. ATP-binding residues include T266, G309, Q313, and G410. ADP-binding residues include G410 and N414.

This sequence belongs to the FGGY kinase family.

It carries out the reaction glycerol + ATP = sn-glycerol 3-phosphate + ADP + H(+). It functions in the pathway polyol metabolism; glycerol degradation via glycerol kinase pathway; sn-glycerol 3-phosphate from glycerol: step 1/1. Its activity is regulated as follows. Inhibited by fructose 1,6-bisphosphate (FBP). Key enzyme in the regulation of glycerol uptake and metabolism. Catalyzes the phosphorylation of glycerol to yield sn-glycerol 3-phosphate. This Shewanella sediminis (strain HAW-EB3) protein is Glycerol kinase.